Consider the following 644-residue polypeptide: ATP-dependent zinc metalloprotease FtsH (644 aa).

Residues 1 to 4 (MAKN) lie on the Cytoplasmic side of the membrane. The helical transmembrane segment at 5–25 (LILWLVIAVVLMSVFQSFGPS) threads the bilayer. At 26–98 (ESNGRKVDYS…VGEPPEEPSL (73 aa)) the chain is on the periplasmic side. A helical membrane pass occupies residues 99 to 119 (LASIFISWFPMLLLIGVWIFF). The Cytoplasmic segment spans residues 120 to 644 (MRQMQGGGGK…NTMSEQLGDK (525 aa)). 192-199 (GPPGTGKT) is an ATP binding site. His414 is a Zn(2+) binding site. Residue Glu415 is part of the active site. Zn(2+)-binding residues include His418 and Asp492. Positions 598-644 (VRPPAGWEEPGASNNAGDNGSPKAPRPVDEPRTPNPGNTMSEQLGDK) are disordered. Residues 632–644 (NPGNTMSEQLGDK) are compositionally biased toward polar residues.

It in the central section; belongs to the AAA ATPase family. In the C-terminal section; belongs to the peptidase M41 family. As to quaternary structure, homohexamer. It depends on Zn(2+) as a cofactor.

The protein resides in the cell inner membrane. Its function is as follows. Acts as a processive, ATP-dependent zinc metallopeptidase for both cytoplasmic and membrane proteins. Plays a role in the quality control of integral membrane proteins. In Escherichia coli O157:H7, this protein is ATP-dependent zinc metalloprotease FtsH.